The sequence spans 351 residues: Histidinol-phosphate aminotransferase (351 aa).

N6-(pyridoxal phosphate)lysine is present on lysine 221.

The protein belongs to the class-II pyridoxal-phosphate-dependent aminotransferase family. Histidinol-phosphate aminotransferase subfamily. In terms of assembly, homodimer. Pyridoxal 5'-phosphate is required as a cofactor.

It catalyses the reaction L-histidinol phosphate + 2-oxoglutarate = 3-(imidazol-4-yl)-2-oxopropyl phosphate + L-glutamate. It functions in the pathway amino-acid biosynthesis; L-histidine biosynthesis; L-histidine from 5-phospho-alpha-D-ribose 1-diphosphate: step 7/9. This chain is Histidinol-phosphate aminotransferase, found in Staphylococcus haemolyticus (strain JCSC1435).